The sequence spans 447 residues: Kynurenine 3-monooxygenase (447 aa).

The protein belongs to the aromatic-ring hydroxylase family. KMO subfamily. It depends on FAD as a cofactor.

The enzyme catalyses L-kynurenine + NADPH + O2 + H(+) = 3-hydroxy-L-kynurenine + NADP(+) + H2O. It functions in the pathway cofactor biosynthesis; NAD(+) biosynthesis; quinolinate from L-kynurenine: step 1/3. Functionally, catalyzes the hydroxylation of L-kynurenine (L-Kyn) to form 3-hydroxy-L-kynurenine (L-3OHKyn). Required for synthesis of quinolinic acid. This chain is Kynurenine 3-monooxygenase, found in Flavobacterium psychrophilum (strain ATCC 49511 / DSM 21280 / CIP 103535 / JIP02/86).